A 508-amino-acid polypeptide reads, in one-letter code: Photosystem II CP47 reaction center protein (508 aa).

A run of 6 helical transmembrane segments spans residues 21–36, 101–115, 140–156, 203–218, 237–252, and 457–472; these read AVHL…WAGS, ITLS…IWHW, GIHL…FGAF, IAAG…FHLS, VLSS…AFVV, and TFAL…HGAR.

This sequence belongs to the PsbB/PsbC family. PsbB subfamily. In terms of assembly, PSII is composed of 1 copy each of membrane proteins PsbA, PsbB, PsbC, PsbD, PsbE, PsbF, PsbH, PsbI, PsbJ, PsbK, PsbL, PsbM, PsbT, PsbX, PsbY, PsbZ, Psb30/Ycf12, at least 3 peripheral proteins of the oxygen-evolving complex and a large number of cofactors. It forms dimeric complexes. It depends on Binds multiple chlorophylls. PSII binds additional chlorophylls, carotenoids and specific lipids. as a cofactor.

Its subcellular location is the plastid. It is found in the chloroplast thylakoid membrane. In terms of biological role, one of the components of the core complex of photosystem II (PSII). It binds chlorophyll and helps catalyze the primary light-induced photochemical processes of PSII. PSII is a light-driven water:plastoquinone oxidoreductase, using light energy to abstract electrons from H(2)O, generating O(2) and a proton gradient subsequently used for ATP formation. The polypeptide is Photosystem II CP47 reaction center protein (Psilotum nudum (Whisk fern)).